Here is a 572-residue protein sequence, read N- to C-terminus: MQSSMLLRVRALPKTASVLSRTKTATYATYKVPRIDNEPNKHYAAGSPDRKALQEALARTQRNAPLSVPLVIAGKEVKSSSSLTQSNPASHGPVATYSNATAKDVQAAIESALEARKSWASTPFADRASVFLKAADLISTKYRYDVMALTMHGQGKNAWQAEIDSAAELCDFFRFGVKYAEDLYAQQPVHHAPGVWNRVEYRPLEGFVYAISPFNFTAIGGNLAGAPALMGNVVVWKPSPSAIASNWLVHQILLEAGLPKNVIQFVPGEAEEVTKTVLDHPDFAALHFTGSTNVFRNLYGQISTRVAAGKYRSYPRIVGETGGKNFHLIHKSADIRNAAVQTVRGAFEYQGQKCSATSRVYVASSIADSFLEQVASEAKSLKVGPPSDFTNFCGPVIHEASFTKLAKVIDEAKNDPELELLAGGSYDSSKGWYIQPTVYRTTNPDHPLLTRELFGPILVVYAYPDATEADFARIAQKIDATGEYGLTGSVFAQDREALAVANDVLRNAAGNFYINCKSTGAVVGQQPFGGARASGTNDKAGSGNLLSRFVSLRSIKEEFVPTYKVAYPSNEA.

300–305 (GQISTR) contacts NAD(+). Residue E320 is the Proton acceptor of the active site. C354 (nucleophile) is an active-site residue.

This sequence belongs to the aldehyde dehydrogenase family.

It is found in the mitochondrion matrix. The catalysed reaction is L-glutamate 5-semialdehyde + NAD(+) + H2O = L-glutamate + NADH + 2 H(+). The protein operates within amino-acid degradation; L-proline degradation into L-glutamate; L-glutamate from L-proline: step 2/2. This chain is Delta-1-pyrroline-5-carboxylate dehydrogenase, mitochondrial (prnC), found in Emericella nidulans (strain FGSC A4 / ATCC 38163 / CBS 112.46 / NRRL 194 / M139) (Aspergillus nidulans).